The primary structure comprises 502 residues: Aspartyl/glutamyl-tRNA(Asn/Gln) amidotransferase subunit B (502 aa).

This sequence belongs to the GatB/GatE family. GatB subfamily. As to quaternary structure, heterotrimer of A, B and C subunits.

The catalysed reaction is L-glutamyl-tRNA(Gln) + L-glutamine + ATP + H2O = L-glutaminyl-tRNA(Gln) + L-glutamate + ADP + phosphate + H(+). It catalyses the reaction L-aspartyl-tRNA(Asn) + L-glutamine + ATP + H2O = L-asparaginyl-tRNA(Asn) + L-glutamate + ADP + phosphate + 2 H(+). Functionally, allows the formation of correctly charged Asn-tRNA(Asn) or Gln-tRNA(Gln) through the transamidation of misacylated Asp-tRNA(Asn) or Glu-tRNA(Gln) in organisms which lack either or both of asparaginyl-tRNA or glutaminyl-tRNA synthetases. The reaction takes place in the presence of glutamine and ATP through an activated phospho-Asp-tRNA(Asn) or phospho-Glu-tRNA(Gln). The sequence is that of Aspartyl/glutamyl-tRNA(Asn/Gln) amidotransferase subunit B from Ruegeria sp. (strain TM1040) (Silicibacter sp.).